A 208-amino-acid chain; its full sequence is Large ribosomal subunit protein uL3 (208 aa).

Positions 123–147 (RHGQSRGPMAHGSRYHRRPGSMGPV) are disordered.

It belongs to the universal ribosomal protein uL3 family. In terms of assembly, part of the 50S ribosomal subunit. Forms a cluster with proteins L14 and L19.

Its function is as follows. One of the primary rRNA binding proteins, it binds directly near the 3'-end of the 23S rRNA, where it nucleates assembly of the 50S subunit. The polypeptide is Large ribosomal subunit protein uL3 (Streptococcus uberis (strain ATCC BAA-854 / 0140J)).